The primary structure comprises 160 residues: Glucagon-1 (160 aa).

A signal peptide spans 1–22 (MSDPGFLAAPVLLLLLVSLASA). 3 consecutive propeptides follow at residues 23 to 40 (SLEQAASRDDDSAERPLS), 74 to 79 (GGSELQ), and 116 to 127 (DGGDHLAENSED). The interval 112–132 (KSRRDGGDHLAENSEDKRHAE) is disordered.

Belongs to the glucagon family.

Its subcellular location is the secreted. Functionally, promotes hydrolysis of glycogen and lipids, and raises the blood sugar level. This is Glucagon-1 (gcg1) from Petromyzon marinus (Sea lamprey).